We begin with the raw amino-acid sequence, 304 residues long: Homoserine kinase (304 aa).

Residue 90–100 (PLARGLGSSAS) coordinates ATP.

The protein belongs to the GHMP kinase family. Homoserine kinase subfamily.

The protein localises to the cytoplasm. The catalysed reaction is L-homoserine + ATP = O-phospho-L-homoserine + ADP + H(+). It participates in amino-acid biosynthesis; L-threonine biosynthesis; L-threonine from L-aspartate: step 4/5. Its function is as follows. Catalyzes the ATP-dependent phosphorylation of L-homoserine to L-homoserine phosphate. This is Homoserine kinase from Staphylococcus aureus (strain NCTC 8325 / PS 47).